The following is a 999-amino-acid chain: Probable metabotropic glutamate receptor mgl-1 (999 aa).

L-glutamate-binding positions include serine 202, 223 to 225 (AST), tyrosine 273, glutamate 363, and lysine 455. Asparagine 518 carries an N-linked (GlcNAc...) asparagine glycan. 7 helical membrane-spanning segments follow: residues 682–704 (SLVP…VVYV), 719–739 (LSYI…VLLS), 751–769 (TGIG…VKTN), 792–812 (VVMT…WLSV), 836–857 (HHFL…TYAV), 871–893 (FIGF…FFGT), and 904–929 (LCIS…IILF). Residues 975-999 (DSTRRRSSRKTSQPTSTSSAHDTFL) form a disordered region. Low complexity predominate over residues 984-993 (KTSQPTSTSS).

The protein belongs to the G-protein coupled receptor 3 family.

The protein localises to the cell membrane. Its function is as follows. G-protein coupled receptor for glutamate. Ligand binding causes a conformation change that triggers signaling via guanine nucleotide-binding proteins (G proteins) and modulates the activity of down-stream effectors. The polypeptide is Probable metabotropic glutamate receptor mgl-1 (mgl-1) (Caenorhabditis elegans).